A 1485-amino-acid chain; its full sequence is ABC multidrug transporter I (1485 aa).

Disordered regions lie at residues 1 to 57 (MDEK…EEFS) and 75 to 111 (KQIS…ALRG). Positions 8–24 (SESSNGSDVDSLSTASA) are enriched in polar residues. N-linked (GlcNAc...) asparagine glycosylation is present at Asn-12. The segment covering 85 to 95 (GKTEDVERSDS) has biased composition (basic and acidic residues). N-linked (GlcNAc...) asparagine glycosylation is found at Asn-132, Asn-335, and Asn-451. The region spanning 163–411 (MHMLGYGKKG…FESLGFKERP (249 aa)) is the ABC transporter 1 domain. 7 helical membrane passes run 522–542 (FAQT…GTVW), 556–576 (GGLL…ELVS), 600–620 (IAQI…FSII), 623–643 (FMCG…IIVL), 664–684 (YAMK…GYLI), 691–711 (EWLR…ALMV), and 774–794 (FGIM…HGET). One can recognise an ABC transporter 2 domain in the interval 846–1089 (FTWEDVCYDV…LLDYFRRNGA (244 aa)). 882-889 (GASGAGKT) contacts ATP. The next 5 helical transmembrane spans lie at 1184-1204 (YGFT…LAFL), 1211-1231 (ASLQ…AIIL), 1268-1288 (LPYS…IPGF), 1299-1319 (FLMV…ISAL), and 1325-1345 (IASQ…GVAI). Asn-1396 and Asn-1418 each carry an N-linked (GlcNAc...) asparagine glycan. Residues 1449–1469 (LGIFLAFIGSNLIILFLAVSF) form a helical membrane-spanning segment.

This sequence belongs to the ABC transporter superfamily. ABCG family. PDR (TC 3.A.1.205) subfamily.

It is found in the cell membrane. It carries out the reaction fluconazole(in) + ATP + H2O = fluconazole(out) + ADP + phosphate + H(+). Its activity is regulated as follows. The efflux inhibitor FK506 does not impair the transport activity. Functionally, ABC efflux transporter that confers resistance to fluconazole (FLC) but shows no resistance to other azoles. Is also able to transport rhodamine 6G (R-6G), a known substrate for many ABC transporters. The polypeptide is ABC multidrug transporter I (Aspergillus fumigatus (strain ATCC MYA-4609 / CBS 101355 / FGSC A1100 / Af293) (Neosartorya fumigata)).